The following is a 729-amino-acid chain: Fatty acid oxidation complex subunit alpha (729 aa).

Positions 1-189 (MLYKGDTLYL…KIGLVDGVVK (189 aa)) are enoyl-CoA hydratase/isomerase. D296 provides a ligand contact to substrate. A 3-hydroxyacyl-CoA dehydrogenase region spans residues 311–729 (ETPKQAAVLG…ARPVGSLKTA (419 aa)). Residues M324, D343, 400 to 402 (VVE), K407, and S429 each bind NAD(+). H450 (for 3-hydroxyacyl-CoA dehydrogenase activity) is an active-site residue. N453 is an NAD(+) binding site. N500 and Y660 together coordinate substrate. The tract at residues 708-729 (RHNEPYYPPVEPARPVGSLKTA) is disordered.

This sequence in the N-terminal section; belongs to the enoyl-CoA hydratase/isomerase family. It in the C-terminal section; belongs to the 3-hydroxyacyl-CoA dehydrogenase family. As to quaternary structure, heterotetramer of two alpha chains (FadB) and two beta chains (FadA).

It catalyses the reaction a (3S)-3-hydroxyacyl-CoA + NAD(+) = a 3-oxoacyl-CoA + NADH + H(+). The catalysed reaction is a (3S)-3-hydroxyacyl-CoA = a (2E)-enoyl-CoA + H2O. The enzyme catalyses a 4-saturated-(3S)-3-hydroxyacyl-CoA = a (3E)-enoyl-CoA + H2O. It carries out the reaction (3S)-3-hydroxybutanoyl-CoA = (3R)-3-hydroxybutanoyl-CoA. It catalyses the reaction a (3Z)-enoyl-CoA = a 4-saturated (2E)-enoyl-CoA. The catalysed reaction is a (3E)-enoyl-CoA = a 4-saturated (2E)-enoyl-CoA. It participates in lipid metabolism; fatty acid beta-oxidation. Its function is as follows. Involved in the aerobic and anaerobic degradation of long-chain fatty acids via beta-oxidation cycle. Catalyzes the formation of 3-oxoacyl-CoA from enoyl-CoA via L-3-hydroxyacyl-CoA. It can also use D-3-hydroxyacyl-CoA and cis-3-enoyl-CoA as substrate. In Salmonella schwarzengrund (strain CVM19633), this protein is Fatty acid oxidation complex subunit alpha.